The chain runs to 69 residues: Conotoxin Cal12.1p5 (69 aa).

The propeptide occupies 1 to 23 (DLITNSYTRGKPRHVTSWRNLKT).

Contains 4 disulfide bonds. In terms of tissue distribution, expressed by the venom duct.

Its subcellular location is the secreted. This is Conotoxin Cal12.1p5 from Californiconus californicus (California cone).